Here is a 192-residue protein sequence, read N- to C-terminus: Fe/S biogenesis protein NfuA (192 aa).

Residues C149 and C152 each contribute to the [4Fe-4S] cluster site.

Belongs to the NfuA family. As to quaternary structure, homodimer. It depends on [4Fe-4S] cluster as a cofactor.

Functionally, involved in iron-sulfur cluster biogenesis. Binds a 4Fe-4S cluster, can transfer this cluster to apoproteins, and thereby intervenes in the maturation of Fe/S proteins. Could also act as a scaffold/chaperone for damaged Fe/S proteins. The sequence is that of Fe/S biogenesis protein NfuA from Shewanella sp. (strain ANA-3).